A 138-amino-acid chain; its full sequence is Transposon Tn10 TetD protein (138 aa).

An HTH araC/xylS-type domain is found at 31 to 129 (KDVLLWIEHN…KVTPSYYRRN (99 aa)). 2 consecutive DNA-binding regions (H-T-H motif) follow at residues 48–69 (DDVA…KKVT) and 96–119 (ILEI…KYIF).

The protein is Transposon Tn10 TetD protein (tetD) of Escherichia coli.